We begin with the raw amino-acid sequence, 173 residues long: Ribosome maturation factor RimM (173 aa).

The PRC barrel domain maps to 97–171; it reads EGEFFYHEII…QITIEPMEGL (75 aa).

The protein belongs to the RimM family. In terms of assembly, binds ribosomal protein uS19.

It localises to the cytoplasm. An accessory protein needed during the final step in the assembly of 30S ribosomal subunit, possibly for assembly of the head region. Essential for efficient processing of 16S rRNA. May be needed both before and after RbfA during the maturation of 16S rRNA. It has affinity for free ribosomal 30S subunits but not for 70S ribosomes. The polypeptide is Ribosome maturation factor RimM (Halalkalibacterium halodurans (strain ATCC BAA-125 / DSM 18197 / FERM 7344 / JCM 9153 / C-125) (Bacillus halodurans)).